The chain runs to 293 residues: MKVSVPATSANLGPGFDCLGLAVSLKNQVIIRPSKFHSVSLKGEGANNPALKDNNMFISIFNDFYQNLSHKKRFFRFEFQNEIPLSRGLGSSSAVIVSAIASAYAIEGIKLERDKLLNLALAYESHPDNITPAVMGGFNVACVQENEVKYINKPIPKSLKAVIVVPNRAISTAMSRKTLPFKYSKEDTIFNISHSSLLTAAFMSENWEMLKYASNDQVHQKYRMKQMPELFEVQKTALKEGALMSTLSGSGSTLFSMAYTDDSRNLEKALKNKFPHFRVFVVDFDNTGVKIEL.

84–94 (PLSRGLGSSSA) is a binding site for ATP.

Belongs to the GHMP kinase family. Homoserine kinase subfamily.

The protein localises to the cytoplasm. It catalyses the reaction L-homoserine + ATP = O-phospho-L-homoserine + ADP + H(+). It functions in the pathway amino-acid biosynthesis; L-threonine biosynthesis; L-threonine from L-aspartate: step 4/5. Catalyzes the ATP-dependent phosphorylation of L-homoserine to L-homoserine phosphate. In Aliarcobacter butzleri (strain RM4018) (Arcobacter butzleri), this protein is Homoserine kinase.